The primary structure comprises 295 residues: 2-methylisocitrate lyase (295 aa).

Position 45–47 (45–47 (SGG)) interacts with substrate. The Mg(2+) site is built by Asp85 and Asp87. Residues 123–124 (CG), Arg158, Glu188, 210–212 (NIT), Arg241, and Arg270 each bind substrate.

The protein belongs to the isocitrate lyase/PEP mutase superfamily. Methylisocitrate lyase family. In terms of assembly, homotetramer; dimer of dimers. Mg(2+) serves as cofactor.

The catalysed reaction is (2S,3R)-3-hydroxybutane-1,2,3-tricarboxylate = pyruvate + succinate. It participates in organic acid metabolism; propanoate degradation. Its function is as follows. Involved in the catabolism of short chain fatty acids (SCFA) via the 2-methylcitrate cycle I (propionate degradation route). Catalyzes the thermodynamically favored C-C bond cleavage of (2R,3S)-2-methylisocitrate to yield pyruvate and succinate via an alpha-carboxy-carbanion intermediate. This is 2-methylisocitrate lyase from Salmonella typhimurium (strain LT2 / SGSC1412 / ATCC 700720).